Reading from the N-terminus, the 322-residue chain is MTQQRHNWTLKEVEALFTLPFNDLLFQAHSIHRKNFDPNQVQISSLLNIKTGACPEDCLYCSQSSKYDTGLEREKLMEIDLVLKQAKQAQDNGATRFCMGAAWRNPTDKSINKVIPMIQGVKDMGMETCVTLGMLTQKQAFVLKEVGLDYYNHNIDTSKENYSNIVTTRNFQDRLNTLESVQNANIRVCSGGILGLGEDQTDRASMLRSLSNLAIHPDSVPLNLLVPIPGTPFENIEPPTESEFIRTIAVARIMMPKSVVRLSAGRTKMGDTMQALCFFAGANSIFYGEQLLTTDNPNTDSDQDLFVRLGINQKQANNLQSV.

The 228-residue stretch at 39–266 (NQVQISSLLN…KSVVRLSAGR (228 aa)) folds into the Radical SAM core domain. Positions 54, 58, and 61 each coordinate [4Fe-4S] cluster. Residues Cys98, Cys129, Cys189, and Arg261 each contribute to the [2Fe-2S] cluster site.

Belongs to the radical SAM superfamily. Biotin synthase family. In terms of assembly, homodimer. The cofactor is [4Fe-4S] cluster. [2Fe-2S] cluster serves as cofactor.

It catalyses the reaction (4R,5S)-dethiobiotin + (sulfur carrier)-SH + 2 reduced [2Fe-2S]-[ferredoxin] + 2 S-adenosyl-L-methionine = (sulfur carrier)-H + biotin + 2 5'-deoxyadenosine + 2 L-methionine + 2 oxidized [2Fe-2S]-[ferredoxin]. It participates in cofactor biosynthesis; biotin biosynthesis; biotin from 7,8-diaminononanoate: step 2/2. Catalyzes the conversion of dethiobiotin (DTB) to biotin by the insertion of a sulfur atom into dethiobiotin via a radical-based mechanism. In Vesicomyosocius okutanii subsp. Calyptogena okutanii (strain HA), this protein is Biotin synthase.